The primary structure comprises 239 residues: Probable transcriptional regulatory protein VC_A0006 (239 aa).

Belongs to the TACO1 family.

The protein resides in the cytoplasm. The chain is Probable transcriptional regulatory protein VC_A0006 from Vibrio cholerae serotype O1 (strain ATCC 39315 / El Tor Inaba N16961).